Reading from the N-terminus, the 541-residue chain is Apolipoprotein N-acyltransferase (541 aa).

The next 6 membrane-spanning stretches (helical) occupy residues 21–41, 54–74, 82–102, 116–136, 157–177, and 189–209; these read LSGF…WYSL, LFVS…SWML, LIYL…SGFS, FLWS…YGIF, FGGF…NMSF, and MLWV…YEYL. The 280-residue stretch at 220 to 499 folds into the CN hydrolase domain; that stretch reads LRVAVVQPAH…SGVLETSLPL (280 aa). Glu-264 (proton acceptor) is an active-site residue. Lys-349 is a catalytic residue. The active-site Nucleophile is Cys-404. A helical transmembrane segment spans residues 512-532; it reads YPMILIAFCAVSYLGGGFLGY.

It belongs to the CN hydrolase family. Apolipoprotein N-acyltransferase subfamily.

It is found in the cell inner membrane. The catalysed reaction is N-terminal S-1,2-diacyl-sn-glyceryl-L-cysteinyl-[lipoprotein] + a glycerophospholipid = N-acyl-S-1,2-diacyl-sn-glyceryl-L-cysteinyl-[lipoprotein] + a 2-acyl-sn-glycero-3-phospholipid + H(+). The protein operates within protein modification; lipoprotein biosynthesis (N-acyl transfer). In terms of biological role, catalyzes the phospholipid dependent N-acylation of the N-terminal cysteine of apolipoprotein, the last step in lipoprotein maturation. The protein is Apolipoprotein N-acyltransferase of Chlamydia pneumoniae (Chlamydophila pneumoniae).